We begin with the raw amino-acid sequence, 114 residues long: Small ribosomal subunit protein bS6 (114 aa).

It belongs to the bacterial ribosomal protein bS6 family.

Functionally, binds together with bS18 to 16S ribosomal RNA. This is Small ribosomal subunit protein bS6 from Protochlamydia amoebophila (strain UWE25).